Consider the following 374-residue polypeptide: UPF0754 membrane protein SAR1937 (374 aa).

2 helical membrane-spanning segments follow: residues 4–24 (LFIIIFMIVVGAIIGGVTNVI) and 354–374 (SLGFILGGIIGFFQGLVAIFV).

Belongs to the UPF0754 family.

The protein localises to the cell membrane. The polypeptide is UPF0754 membrane protein SAR1937 (Staphylococcus aureus (strain MRSA252)).